The following is a 237-amino-acid chain: Redox-sensing transcriptional repressor Rex (237 aa).

Positions 45-84 (LYYRELHRLLAAGESSTNSRDLGAMVNVSPAVVRRDLSSI) form a DNA-binding region, H-T-H motif. 119-124 (GVGSLG) lines the NAD(+) pocket.

It belongs to the transcriptional regulatory Rex family. As to quaternary structure, homodimer.

Its subcellular location is the cytoplasm. Functionally, modulates transcription in response to changes in cellular NADH/NAD(+) redox state. In Rhodopirellula baltica (strain DSM 10527 / NCIMB 13988 / SH1), this protein is Redox-sensing transcriptional repressor Rex.